The following is a 340-amino-acid chain: Probable tRNA pseudouridine synthase B (340 aa).

Asp82 functions as the Nucleophile in the catalytic mechanism. The PUA domain occupies 250–325 (LPKVWIKDSA…IAVDVEKVFM (76 aa)).

Belongs to the pseudouridine synthase TruB family. Type 2 subfamily.

The enzyme catalyses uridine(55) in tRNA = pseudouridine(55) in tRNA. Could be responsible for synthesis of pseudouridine from uracil-55 in the psi GC loop of transfer RNAs. The protein is Probable tRNA pseudouridine synthase B of Pyrococcus furiosus (strain ATCC 43587 / DSM 3638 / JCM 8422 / Vc1).